A 457-amino-acid chain; its full sequence is Peptidyl-prolyl cis-trans isomerase FKBP5 (457 aa).

At Met-1 the chain carries N-acetylmethionine. The tract at residues 1–26 (MTTDEGAKNSGESPTATVAEQGEDIT) is disordered. Ser-13 is subject to Phosphoserine. The residue at position 28 (Lys-28) is an N6-acetyllysine. The PPIase FKBP-type 1 domain occupies 50 to 138 (GDKVYVHYKG…FFEIELLDFK (89 aa)). At Lys-155 the chain carries N6-acetyllysine. One can recognise a PPIase FKBP-type 2 domain in the interval 165–251 (GATVEIHLEG…IYEVTLKSFE (87 aa)). TPR repeat units lie at residues 268–301 (AAIV…LEME), 317–350 (LAAF…DSAN), and 351–384 (EKGL…NPQN). The tract at residues 421–457 (AKEEANKAMGKKTSEGVTNEKGTDSSAVEEEKAEGHV) is disordered. Position 445 is a phosphoserine (Ser-445).

In terms of assembly, part of a heteromultimeric cytoplasmic complex with HSP90AA1, HSPA1A/HSPA1B and steroid receptors. Upon ligand binding dissociates from the complex and FKBP4 takes its place. Interacts with functionally mature heterooligomeric progesterone receptor complexes along with HSP90 and TEBP. Interacts with NR3C1. Interacts with Akt/AKT1 and PHLPP1; enhancing dephosphorylation and subsequent activation of Akt/AKT1. Interacts with IFI44L; this interaction modulates the kinase activity of IKBKB and IKBKE. Interacts with IKBKB and IKBKE. Acetylation impairs ability to promote interaction between Akt/AKT1 and PHLPP1. Deacetylation by SIRT7 promotes interaction between Akt/AKT1 and PHLPP1, leading to suppress Akt/AKT1 activation. Post-translationally, ubiquitinated, leading to degradation in a proteasome-dependent manner. Deubiquitinated by USP49, leading to stabilization.

The protein resides in the cytoplasm. Its subcellular location is the nucleus. The enzyme catalyses [protein]-peptidylproline (omega=180) = [protein]-peptidylproline (omega=0). Its activity is regulated as follows. Inhibited by both FK506 and rapamycin. Immunophilin protein with PPIase and co-chaperone activities. Component of unligated steroid receptors heterocomplexes through interaction with heat-shock protein 90 (HSP90). Plays a role in the intracellular trafficking of heterooligomeric forms of steroid hormone receptors maintaining the complex into the cytoplasm when unliganded. Acts as a regulator of Akt/AKT1 activity by promoting the interaction between Akt/AKT1 and PHLPP1, thereby enhancing dephosphorylation and subsequent activation of Akt/AKT1. Interacts with IKBKE and IKBKB which facilitates IKK complex assembly leading to increased IKBKE and IKBKB kinase activity, NF-kappaB activation, and IFN production. This is Peptidyl-prolyl cis-trans isomerase FKBP5 (FKBP5) from Chlorocebus aethiops (Green monkey).